The chain runs to 295 residues: Proline-rich proteoglycan 2 (295 aa).

The signal sequence occupies residues 1 to 16; the sequence is MLVVLLTAALLVLSSA. The interval 16–295 is disordered; that stretch reads AQGVDEEVVY…QSSFLWSFSA (280 aa). Residues 26–41 are compositionally biased toward low complexity; sequence EDSSQQLELEQQSQGH. Positions 48-58 are enriched in pro residues; that stretch reads PPPGGLPPRPP. Residues 62–78 show a composition bias toward acidic residues; sequence ENGDGDDNDDGDDDGSG. Pro residues-rich tracts occupy residues 100 to 187 and 194 to 278; these read PPPA…PPGG and QGPP…PQGP.

Post-translationally, contains glycosaminoglycans of chondroitin-sulfate and heparan types.

It is found in the secreted. This chain is Proline-rich proteoglycan 2 (Prpg2), found in Rattus norvegicus (Rat).